The primary structure comprises 287 residues: Putative sugar uptake protein LJ_0170 (287 aa).

10 helical membrane-spanning segments follow: residues 4–23 (VYLF…IASV), 28–50 (VYNQ…MAIM), 56–78 (WSLF…GQYI), 91–108 (ISTG…VLAF), 118–137 (LYGF…TSFT), 150–169 (VSTI…SSSI), 179–198 (SIFF…YTLV), 211–230 (VQSG…YILS), 240–259 (FVIS…IFLH), and 266–285 (GLIF…MLTT).

This sequence belongs to the GRP transporter (TC 2.A.7.5) family.

It localises to the cell membrane. The protein is Putative sugar uptake protein LJ_0170 of Lactobacillus johnsonii (strain CNCM I-12250 / La1 / NCC 533).